A 741-amino-acid chain; its full sequence is NAD(P)H-quinone oxidoreductase subunit 5, chloroplastic (741 aa).

16 helical membrane-spanning segments follow: residues 9-29 (WVIPLLPLPVILSMGFGLFLI), 39-59 (IWAFPSVLLLSIAMVFSVQLS), 89-109 (IDPLTSIMLMLITTVGILVLI), 125-145 (FIYISFFNISMLGLVTSSNLI), 147-167 (IYFFWELVGMCSYLLIGFWFT), 184-204 (IGDFGLLLGILGFFWITGSLE), 216-238 (IPNNGTTSLLTTLCAFLLFLGAV), 258-278 (TPISALIHAATMVAAGIFLLA), 280-300 (LLPLFISLPLIMTFISLVGTI), 327-347 (LGYMMLALGIGSYQAALFHLI), 354-374 (ALLFLGSGSIIHSMEPLVGYS), 396-416 (TAFLWGTLSICGIPPLACFWS), 425-445 (WLYSPFFGIIASFTAGLTAFY), 544-564 (LFPLLILLLFTFFIGFIGIPF), 612-632 (SLVILGLFIAYIFYGSAYSFF), and 721-741 (ISSYLFFFLCYVSVFLFFFLS).

Belongs to the complex I subunit 5 family. NDH is composed of at least 16 different subunits, 5 of which are encoded in the nucleus.

The protein resides in the plastid. The protein localises to the chloroplast thylakoid membrane. The enzyme catalyses a plastoquinone + NADH + (n+1) H(+)(in) = a plastoquinol + NAD(+) + n H(+)(out). The catalysed reaction is a plastoquinone + NADPH + (n+1) H(+)(in) = a plastoquinol + NADP(+) + n H(+)(out). Functionally, NDH shuttles electrons from NAD(P)H:plastoquinone, via FMN and iron-sulfur (Fe-S) centers, to quinones in the photosynthetic chain and possibly in a chloroplast respiratory chain. The immediate electron acceptor for the enzyme in this species is believed to be plastoquinone. Couples the redox reaction to proton translocation, and thus conserves the redox energy in a proton gradient. The protein is NAD(P)H-quinone oxidoreductase subunit 5, chloroplastic (ndhF) of Brachypodium distachyon (Purple false brome).